Reading from the N-terminus, the 161-residue chain is Small ribosomal subunit protein uS9 (161 aa).

Belongs to the universal ribosomal protein uS9 family.

This chain is Small ribosomal subunit protein uS9, found in Rickettsia felis (strain ATCC VR-1525 / URRWXCal2) (Rickettsia azadi).